A 148-amino-acid polypeptide reads, in one-letter code: uncharacterized protein (148 aa).

One can recognise an HTH asnC-type domain in the interval 3 to 64; it reads LDALDRKILE…KLNYESIGYD (62 aa). Residues 22-41 constitute a DNA-binding region (H-T-H motif); the sequence is YREIAKDLNVAVGTIYNRIK.

This is an uncharacterized protein from Pyrococcus horikoshii (strain ATCC 700860 / DSM 12428 / JCM 9974 / NBRC 100139 / OT-3).